The chain runs to 439 residues: Tol-Pal system protein TolB (439 aa).

The signal sequence occupies residues 1 to 21; sequence MRFRLALSLLSLALFAAPAAA.

The protein belongs to the TolB family. The Tol-Pal system is composed of five core proteins: the inner membrane proteins TolA, TolQ and TolR, the periplasmic protein TolB and the outer membrane protein Pal. They form a network linking the inner and outer membranes and the peptidoglycan layer.

It is found in the periplasm. In terms of biological role, part of the Tol-Pal system, which plays a role in outer membrane invagination during cell division and is important for maintaining outer membrane integrity. The polypeptide is Tol-Pal system protein TolB (Rhizorhabdus wittichii (strain DSM 6014 / CCUG 31198 / JCM 15750 / NBRC 105917 / EY 4224 / RW1) (Sphingomonas wittichii)).